A 63-amino-acid chain; its full sequence is DNA-directed RNA polymerase 7 kDa subunit (63 aa).

The protein belongs to the poxviridae DNA-directed RNA polymerase 7 kDa subunit family. In terms of assembly, the DNA-dependent RNA polymerase used for intermediate and late genes expression consists of eight subunits 147 kDa, 133 kDa, 35 kDa, 30 kDa, 22 kDa, 19 kDa, 18 kDa and 7 kDa totalling more than 500 kDa in mass. The same holoenzyme, with the addition of the transcription-specificity factor RAP94, is used for early gene expression.

The protein resides in the virion. The enzyme catalyses RNA(n) + a ribonucleoside 5'-triphosphate = RNA(n+1) + diphosphate. Functionally, part of the DNA-dependent RNA polymerase which catalyzes the transcription of viral DNA into RNA using the four ribonucleoside triphosphates as substrates. Responsible for the transcription of early, intermediate and late genes. DNA-dependent RNA polymerase associates with the early transcription factor (ETF) thereby allowing the early genes transcription. Late transcription, and probably also intermediate transcription, require newly synthesized RNA polymerase. This chain is DNA-directed RNA polymerase 7 kDa subunit (RPO7), found in Homo sapiens (Human).